Reading from the N-terminus, the 204-residue chain is Large ribosomal subunit protein uL4 (204 aa).

A compositionally biased stretch (polar residues) spans glycine 42–valine 52. The interval glycine 42 to glycine 70 is disordered.

The protein belongs to the universal ribosomal protein uL4 family. Part of the 50S ribosomal subunit.

Functionally, one of the primary rRNA binding proteins, this protein initially binds near the 5'-end of the 23S rRNA. It is important during the early stages of 50S assembly. It makes multiple contacts with different domains of the 23S rRNA in the assembled 50S subunit and ribosome. Forms part of the polypeptide exit tunnel. This chain is Large ribosomal subunit protein uL4, found in Xylella fastidiosa (strain M12).